The primary structure comprises 513 residues: Cytochrome P450 1A2 (513 aa).

O-linked (GlcNAc) serine glycosylation is present at Ser68. Substrate is bound at residue Phe225. Cys456 serves as a coordination point for heme.

It belongs to the cytochrome P450 family. In terms of assembly, interacts with PGRMC1; the interaction requires PGRMC1 homodimerization. Heme is required as a cofactor.

It is found in the endoplasmic reticulum membrane. The protein localises to the microsome membrane. It carries out the reaction an organic molecule + reduced [NADPH--hemoprotein reductase] + O2 = an alcohol + oxidized [NADPH--hemoprotein reductase] + H2O + H(+). The enzyme catalyses 17beta-estradiol + reduced [NADPH--hemoprotein reductase] + O2 = 2-hydroxy-17beta-estradiol + oxidized [NADPH--hemoprotein reductase] + H2O + H(+). It catalyses the reaction 17beta-estradiol + reduced [NADPH--hemoprotein reductase] + O2 = 4-hydroxy-17beta-estradiol + oxidized [NADPH--hemoprotein reductase] + H2O + H(+). The catalysed reaction is estrone + reduced [NADPH--hemoprotein reductase] + O2 = 2-hydroxyestrone + oxidized [NADPH--hemoprotein reductase] + H2O + H(+). It carries out the reaction estrone + reduced [NADPH--hemoprotein reductase] + O2 = 4-hydroxyestrone + oxidized [NADPH--hemoprotein reductase] + H2O + H(+). The enzyme catalyses cholesterol + reduced [NADPH--hemoprotein reductase] + O2 = 25-hydroxycholesterol + oxidized [NADPH--hemoprotein reductase] + H2O + H(+). It catalyses the reaction all-trans-retinol + reduced [NADPH--hemoprotein reductase] + O2 = all-trans-retinal + oxidized [NADPH--hemoprotein reductase] + 2 H2O + H(+). The catalysed reaction is all-trans-retinal + reduced [NADPH--hemoprotein reductase] + O2 = all-trans-retinoate + oxidized [NADPH--hemoprotein reductase] + H2O + 2 H(+). It carries out the reaction (5Z,8Z,11Z,14Z)-eicosatetraenoate + reduced [NADPH--hemoprotein reductase] + O2 = (14R,15S)-epoxy-(5Z,8Z,11Z)-eicosatrienoate + oxidized [NADPH--hemoprotein reductase] + H2O + H(+). The enzyme catalyses (5Z,8Z,11Z,14Z)-eicosatetraenoate + reduced [NADPH--hemoprotein reductase] + O2 = (14S,15R)-epoxy-(5Z,8Z,11Z)-eicosatrienoate + oxidized [NADPH--hemoprotein reductase] + H2O + H(+). It catalyses the reaction (5Z,8Z,11Z,14Z,17Z)-eicosapentaenoate + reduced [NADPH--hemoprotein reductase] + O2 = (17R,18S)-epoxy-(5Z,8Z,11Z,14Z)-eicosatetraenoate + oxidized [NADPH--hemoprotein reductase] + H2O + H(+). The catalysed reaction is (4Z,7Z,10Z,13Z,16Z,19Z)-docosahexaenoate + reduced [NADPH--hemoprotein reductase] + O2 = (19R,20S)-epoxy-(4Z,7Z,10Z,13Z,16Z)-docosapentaenoate + oxidized [NADPH--hemoprotein reductase] + H2O + H(+). It carries out the reaction (5S)-hydroperoxy-(6E,8Z,11Z,14Z)-eicosatetraenoate = 5-oxo-(6E,8Z,11Z,14Z)-eicosatetraenoate + H2O. The enzyme catalyses (12S)-hydroperoxy-(5Z,8Z,10E,14Z)-eicosatetraenoate = 12-oxo-(5Z,8Z,10E,14Z)-eicosatetraenoate + H2O. It catalyses the reaction (15S)-hydroperoxy-(5Z,8Z,11Z,13E)-eicosatetraenoate = 15-oxo-(5Z,8Z,11Z,13E)-eicosatetraenoate + H2O. The catalysed reaction is (13S)-hydroperoxy-(9Z,11E)-octadecadienoate = 13-oxo-(9Z,11E)-octadecadienoate + H2O. It carries out the reaction (5Z,8Z,11Z,14Z)-eicosatetraenoate + reduced [NADPH--hemoprotein reductase] + O2 = 13-hydroxy-(5Z,8Z,11Z,14Z)-eicosatetraenoate + oxidized [NADPH--hemoprotein reductase] + H2O + H(+). The enzyme catalyses (5Z,8Z,11Z,14Z)-eicosatetraenoate + reduced [NADPH--hemoprotein reductase] + O2 = 19-hydroxy-(5Z,8Z,11Z,14Z)-eicosatetraenoate + oxidized [NADPH--hemoprotein reductase] + H2O + H(+). It catalyses the reaction (9Z,12Z)-octadecadienoate + reduced [NADPH--hemoprotein reductase] + O2 = 11-hydroxy-(9Z,12Z)-octadecadienoate + oxidized [NADPH--hemoprotein reductase] + H2O + H(+). It functions in the pathway cofactor metabolism; retinol metabolism. It participates in steroid metabolism; cholesterol metabolism. The protein operates within lipid metabolism; arachidonate metabolism. A cytochrome P450 monooxygenase involved in the metabolism of various endogenous substrates, including fatty acids, steroid hormones and vitamins. Mechanistically, uses molecular oxygen inserting one oxygen atom into a substrate, and reducing the second into a water molecule, with two electrons provided by NADPH via cytochrome P450 reductase (NADPH--hemoprotein reductase). Catalyzes the hydroxylation of carbon-hydrogen bonds. Exhibits high catalytic activity for the formation of hydroxyestrogens from estrone (E1) and 17beta-estradiol (E2), namely 2-hydroxy E1 and E2. Metabolizes cholesterol toward 25-hydroxycholesterol, a physiological regulator of cellular cholesterol homeostasis. May act as a major enzyme for all-trans retinoic acid biosynthesis in the liver. Catalyzes two successive oxidative transformation of all-trans retinol to all-trans retinal and then to the active form all-trans retinoic acid. Primarily catalyzes stereoselective epoxidation of the last double bond of polyunsaturated fatty acids (PUFA), displaying a strong preference for the (R,S) stereoisomer. Catalyzes bisallylic hydroxylation and omega-1 hydroxylation of PUFA. May also participate in eicosanoids metabolism by converting hydroperoxide species into oxo metabolites (lipoxygenase-like reaction, NADPH-independent). Plays a role in the oxidative metabolism of xenobiotics. Catalyzes the N-hydroxylation of heterocyclic amines and the O-deethylation of phenacetin. Metabolizes caffeine via N3-demethylation. This Mus musculus (Mouse) protein is Cytochrome P450 1A2 (Cyp1a2).